A 234-amino-acid polypeptide reads, in one-letter code: Conidial surface nicotinamide adenine dinucleotide glycohydrolase nadA (234 aa).

Residues 1–20 (MIFTNAILVISALLPATVLS) form the signal peptide. Residues 21 to 117 (LQHTEDSLFP…LDTEEQPILG (97 aa)) form a thump region. Intrachain disulfides connect Cys33/Cys80 and Cys38/Cys50. Asn45, Asn95, and Asn118 each carry an N-linked (GlcNAc...) asparagine glycan. A TNT domain is found at 120–212 (TLPVGMKLDR…GLIDDGYLRR (93 aa)). The active site involves Arg129. NAD(+)-binding residues include Phe130, Thr136, and Arg148. Gln194 is a catalytic residue. Ca(2+) contacts are provided by Ser216, Asp219, Glu220, and Glu223.

It belongs to the fungal surface NADase family. As to quaternary structure, homodimer. In terms of processing, N-glycosylated.

Its subcellular location is the secreted. The catalysed reaction is NAD(+) + H2O = ADP-D-ribose + nicotinamide + H(+). The enzyme catalyses NADP(+) + H2O = ADP-D-ribose 2'-phosphate + nicotinamide + H(+). With respect to regulation, the catalytic activity is positively regulated by calcium via its binding to the calcium-binding site. Conidial surface nicotinamide adenine dinucleotide glycohydrolase that cleave NAD(+) and NADP(+) but not their reduced counterparts, NADH and NADPH. Lacks both ADP-ribosyl cyclase and base exchange activity and does not mediate synthesis of calcium messengers cADPR or NAADP. Plays a role in pathogenicity by depleting the host's NAD(+) pool. The sequence is that of Conidial surface nicotinamide adenine dinucleotide glycohydrolase nadA from Aspergillus fumigatus (strain ATCC MYA-4609 / CBS 101355 / FGSC A1100 / Af293) (Neosartorya fumigata).